Consider the following 223-residue polypeptide: MSNMNQTIMDAFHFRHATKQFDPQKKVSKEDFETILESGRLSPSSLGLEPWKFVVIQDQALRDELKAHSWGAAKQLDTASHFVLIFARKNVTSRSPYVQHMLRDIKKYEAQTIPAVEQKFDAFQADFHISDNDQALYDWSSKQTYIALGNMMTTAALLGIDSCPMEGFSLDTVTDILANKGILDTEQFGLSVMVAFGYRQQDPPKNKTRQAYEDVIEWVGPKE.

It belongs to the nitroreductase family. The cofactor is FMN.

In Staphylococcus aureus (strain bovine RF122 / ET3-1), this protein is Putative NAD(P)H nitroreductase SAB2397c.